The sequence spans 136 residues: Large ribosomal subunit protein uL16 (136 aa).

This sequence belongs to the universal ribosomal protein uL16 family. As to quaternary structure, part of the 50S ribosomal subunit.

Binds 23S rRNA and is also seen to make contacts with the A and possibly P site tRNAs. The chain is Large ribosomal subunit protein uL16 from Edwardsiella ictaluri (strain 93-146).